The sequence spans 763 residues: Phosphoglycerol transferase I (763 aa).

Transmembrane regions (helical) follow at residues 1 to 21 (MSEL…AWKA), 26 to 46 (WWFA…ITLF), 77 to 97 (ILPG…LGWI), and 108 to 128 (FGYS…SPAF).

Belongs to the OpgB family.

It is found in the cell inner membrane. It carries out the reaction a phosphatidylglycerol + a membrane-derived-oligosaccharide D-glucose = a 1,2-diacyl-sn-glycerol + a membrane-derived-oligosaccharide 6-(glycerophospho)-D-glucose.. Its pathway is glycan metabolism; osmoregulated periplasmic glucan (OPG) biosynthesis. Functionally, transfers a phosphoglycerol residue from phosphatidylglycerol to the membrane-bound nascent glucan backbones. The sequence is that of Phosphoglycerol transferase I from Escherichia coli (strain 55989 / EAEC).